Here is a 128-residue protein sequence, read N- to C-terminus: Large ribosomal subunit protein bL17 (128 aa).

Belongs to the bacterial ribosomal protein bL17 family. Part of the 50S ribosomal subunit. Contacts protein L32.

In Streptococcus pyogenes serotype M49 (strain NZ131), this protein is Large ribosomal subunit protein bL17.